Consider the following 232-residue polypeptide: PsbP domain-containing protein 2, chloroplastic (232 aa).

Residues 1–34 (MWSQSFLGSAPKLCLFSSSLPPFSHHKIHKFFCF) constitute a chloroplast transit peptide. A thylakoid-targeting transit peptide spans 35-71 (AQNPSSTVSINLSKRHLNLSILTLFFNGFLLDNKAKS).

Belongs to the PsbP family.

It is found in the plastid. The protein resides in the chloroplast thylakoid lumen. The polypeptide is PsbP domain-containing protein 2, chloroplastic (PPD2) (Arabidopsis thaliana (Mouse-ear cress)).